The following is a 210-amino-acid chain: T-cell antigen CD7 (210 aa).

Positions M1–A23 are cleaved as a signal peptide. Residues Q24–K129 enclose the Ig-like domain. Over Q24 to P150 the chain is Extracellular. N42, N86, and N93 each carry an N-linked (GlcNAc...) asparagine glycan. A disulfide bridge links C45 with C111. A helical membrane pass occupies residues A151 to L171. C168 carries the S-palmitoyl cysteine lipid modification. Topologically, residues R172–Q210 are cytoplasmic.

Interacts with SECTM1.

Its subcellular location is the membrane. Transmembrane glycoprotein expressed by T-cells and natural killer (NK) cells and their precursors. Plays a costimulatory role in T-cell activation upon binding to its ligand K12/SECTM1. In turn, mediates the production of cytokines such as IL-2. On resting NK-cells, CD7 activation results in a significant induction of gamma-interferon levels. The polypeptide is T-cell antigen CD7 (Cd7) (Mus musculus (Mouse)).